A 451-amino-acid polypeptide reads, in one-letter code: Cyclin-dependent kinase 18 (451 aa).

A phosphoserine mark is found at Ser12, Ser51, Ser66, Ser75, and Ser109. A Protein kinase domain is found at 121-402 (YVKLDKLGEG…AEAALNHPYF (282 aa)). ATP contacts are provided by residues 127–135 (LGEGTYATV) and Lys150. The active-site Proton acceptor is Asp242. Ser417 and Ser420 each carry phosphoserine.

The protein belongs to the protein kinase superfamily. CMGC Ser/Thr protein kinase family. CDC2/CDKX subfamily. In brain, kidney, intestine and at a much lower level, in fetal tissues.

It carries out the reaction L-seryl-[protein] + ATP = O-phospho-L-seryl-[protein] + ADP + H(+). It catalyses the reaction L-threonyl-[protein] + ATP = O-phospho-L-threonyl-[protein] + ADP + H(+). Its function is as follows. May play a role in signal transduction cascades in terminally differentiated cells. This is Cyclin-dependent kinase 18 (Cdk18) from Mus musculus (Mouse).